The chain runs to 1383 residues: DNA-directed RNA polymerase subunit beta (1383 aa).

This sequence belongs to the RNA polymerase beta chain family. In terms of assembly, the RNAP catalytic core consists of 2 alpha, 1 beta, 1 beta' and 1 omega subunit. When a sigma factor is associated with the core the holoenzyme is formed, which can initiate transcription.

It carries out the reaction RNA(n) + a ribonucleoside 5'-triphosphate = RNA(n+1) + diphosphate. DNA-dependent RNA polymerase catalyzes the transcription of DNA into RNA using the four ribonucleoside triphosphates as substrates. The chain is DNA-directed RNA polymerase subunit beta from Bartonella bacilliformis (strain ATCC 35685 / KC583 / Herrer 020/F12,63).